Here is a 470-residue protein sequence, read N- to C-terminus: Ribosomal protein uS12 methylthiotransferase RimO (470 aa).

The region spanning 4 to 120 (TRVYLHTLGC…IARVVSDAQA (117 aa)) is the MTTase N-terminal domain. Residues cysteine 13, cysteine 49, cysteine 83, cysteine 155, cysteine 159, and cysteine 162 each coordinate [4Fe-4S] cluster. Residues 141–371 (SLPSHTAYLK…MALQQEISRE (231 aa)) enclose the Radical SAM core domain. The 69-residue stretch at 374–442 (RAMVGRRLEV…EYDLVGHVVA (69 aa)) folds into the TRAM domain. The interval 447–470 (RARRPLPAPAGGETPRRGGLPVVG) is disordered.

The protein belongs to the methylthiotransferase family. RimO subfamily. It depends on [4Fe-4S] cluster as a cofactor.

It localises to the cytoplasm. The catalysed reaction is L-aspartate(89)-[ribosomal protein uS12]-hydrogen + (sulfur carrier)-SH + AH2 + 2 S-adenosyl-L-methionine = 3-methylsulfanyl-L-aspartate(89)-[ribosomal protein uS12]-hydrogen + (sulfur carrier)-H + 5'-deoxyadenosine + L-methionine + A + S-adenosyl-L-homocysteine + 2 H(+). Its function is as follows. Catalyzes the methylthiolation of an aspartic acid residue of ribosomal protein uS12. This Anaeromyxobacter sp. (strain Fw109-5) protein is Ribosomal protein uS12 methylthiotransferase RimO.